A 464-amino-acid polypeptide reads, in one-letter code: MTVKTRFAPSPTGYLHIGGVRTALFSWAFARHHKGEFLLRIEDTDLARSTAESVNIILDGMKWVGLDYDNADNVVYQTRRFDRYKEVIAELLAKGDAYYCYCSKEELEAMREKAEKEGTATYDRRWRPEAGKTLPEIPAGVQPVVRFKTPLDGVTKWTDLVKGEISIPNEALDDLIIARADGTPTYNFCAVVDDYDMGVTHIIRGDDHVNNTPKQINILKAIGANLPEYGHLPMILNEQGKKISKRSGDTVAITDFGAMGILPEAMLNYLARLGWAHGDDEFFTTEQFIEWFDLKDVSPSPSRMDLKKLYWINGEHIKITPDGKLTELVKPRLALRDIHETEKPALEDVLALVKDRAQDLNALADECLYFYKKQVPAEADVAKHWDDEAAARMLRFAERLEGLEDWNAKAIHDLFKPFCDEEGIKMGKLGMPLRLAVCGTAKTPSVDAVLALISKEKVLKRIRA.

Positions 9-19 (PSPTGYLHIGG) match the 'HIGH' region motif. The 'KMSKS' region motif lies at 242–246 (KISKR). Lys245 contacts ATP.

It belongs to the class-I aminoacyl-tRNA synthetase family. Glutamate--tRNA ligase type 1 subfamily. Monomer.

The protein localises to the cytoplasm. The enzyme catalyses tRNA(Glu) + L-glutamate + ATP = L-glutamyl-tRNA(Glu) + AMP + diphosphate. Catalyzes the attachment of glutamate to tRNA(Glu) in a two-step reaction: glutamate is first activated by ATP to form Glu-AMP and then transferred to the acceptor end of tRNA(Glu). The polypeptide is Glutamate--tRNA ligase (Neisseria gonorrhoeae (strain ATCC 700825 / FA 1090)).